Here is a 1037-residue protein sequence, read N- to C-terminus: Sodium/potassium exporting P-type ATPase cta3 (1037 aa).

At 1–61 (MVTINISNPV…GVSAWKVLLR (61 aa)) the chain is on the cytoplasmic side. Residues 62 to 82 (QVLNAMCVVLILAAALSFGTT) form a helical membrane-spanning segment. Position 83 (Asp-83) is a topological domain, extracellular. Residues 84–104 (WIEGGVISAIIVLNITVGFIQ) traverse the membrane as a helical segment. At 105–281 (EYKAEKTMDS…LNVGTPLQRK (177 aa)) the chain is on the cytoplasmic side. A helical transmembrane segment spans residues 282 to 302 (LTVLAYILFCIAIILAIIVMA). The Extracellular portion of the chain corresponds to 303–313 (AHSFHVTNEVS). Residues 314–334 (IYAISLGISIIPESLIAVLSI) form a helical membrane-spanning segment. The Cytoplasmic segment spans residues 335–760 (TMAMGQKNMS…GRRMFDNIMR (426 aa)). The active-site 4-aspartylphosphate intermediate is Asp-368. Residues Asp-368 and Thr-370 each contribute to the Mg(2+) site. Positions 370, 468, 520, 559, 620, 621, 622, 678, and 684 each coordinate ATP. Residue Asp-703 participates in Mg(2+) binding. Asn-706 is a binding site for ATP. The chain crosses the membrane as a helical span at residues 761-781 (FVLHLLVSNVGEVILLVVGLA). The Extracellular segment spans residues 782-787 (FRDEVH). A helical membrane pass occupies residues 788 to 808 (LSVFPMSPVEILWCNMITSSF). The Cytoplasmic segment spans residues 809–844 (PSMGLGMELAQPDVMERLPHDNKVGIFQKSLIVDMM). Residues 845 to 865 (VYGFFLGVVSLMTWVVIMYGF) form a helical membrane-spanning segment. Residues 866–889 (GTGNLSYDCNAHYHAGCNDVFKAR) lie on the Extracellular side of the membrane. Asn-869 carries N-linked (GlcNAc...) asparagine glycosylation. The chain crosses the membrane as a helical span at residues 890–910 (SAVFAVVTFCILIMAVEVKNF). Topologically, residues 911–939 (DNSLFNLHGIPWGEWNFRYFLHTLVENKF) are cytoplasmic. Residues 940-960 (LAWAIALAAVSVFPTIYIPVI) traverse the membrane as a helical segment. The Extracellular segment spans residues 961 to 969 (NRDVFKHTY). The helical transmembrane segment at 970-990 (IGWEWGVVAVAVMFYFFYVEI) threads the bilayer. Topologically, residues 991-1037 (WKSIRRSLTNPQKKGKFRRTLSNTITTESKLSEKDLEHRLFLQSRRA) are cytoplasmic. The residue at position 1012 (Ser-1012) is a Phosphoserine.

The protein belongs to the cation transport ATPase (P-type) (TC 3.A.3) family. Type IID subfamily. The cofactor is Mg(2+). The active site is phosphorylated in presence of sodium or potassium and in conditions of higher pH. Not phosphorylated in presence of calcium ions.

It is found in the cell membrane. The catalysed reaction is Na(+)(in) + ATP + H2O = Na(+)(out) + ADP + phosphate + H(+). It catalyses the reaction K(+)(in) + ATP + H2O = K(+)(out) + ADP + phosphate + H(+). In terms of biological role, catalyzes the hydrolysis of ATP coupled with the export of sodium and potassium from the cell. May export sodium less efficiently. May transport other cations such as lithium. Sodium/potassium efflux ATPases are involved in salt tolerance and maintaining the membrane potential across the plasma membrane in high salinity (Na+) or alkaline (K+) environments. The chain is Sodium/potassium exporting P-type ATPase cta3 from Schizosaccharomyces pombe (strain 972 / ATCC 24843) (Fission yeast).